The sequence spans 957 residues: Dystrophin-related protein 2 (957 aa).

Spectrin repeat units lie at residues 102-179 and 231-337; these read DHSG…EELE and EHLL…QLQD. Residues 358–383 form the WW domain; sequence WERAISPNKVPYYINHQAQTTCWDHP. The ZZ-type; degenerate zinc finger occupies 605–661; the sequence is KHQTKCSICRQCPIKGFRYRSLKQFNVDICQTCFLTGKASKGNKLHYPIMEYYTPTT. Zn(2+)-binding residues include cysteine 610, cysteine 613, cysteine 634, and cysteine 637. Position 748 is a phosphoserine (serine 748). Residues 877-894 are compositionally biased toward low complexity; sequence PPTESDGNGSAGSSLASS. The segment at 877–923 is disordered; it reads PPTESDGNGSAGSSLASSPRQSEGSHPREKGQTTPDTEAADDVGSKS. Residue threonine 910 is modified to Phosphothreonine.

Interacts with PRX; this enhances phosphorylation. Identified in a dystroglycan complex that contains at least PRX, DRP2, UTRN, DMD and DAG1. Detected in trigeminal nerve Schwann cells. Detected in brain cortex and hippocampus. Detected in brain membrane fractions and highly enriched in the postsynaptic density (at protein level).

The protein localises to the postsynaptic density. The protein resides in the cell projection. It localises to the dendrite. Its subcellular location is the perikaryon. It is found in the cell membrane. Functionally, required for normal myelination and for normal organization of the cytoplasm and the formation of Cajal bands in myelinating Schwann cells. Required for normal PRX location at appositions between the abaxonal surface of the myelin sheath and the Schwann cell plasma membrane. Possibly involved in membrane-cytoskeleton interactions of the central nervous system. In Rattus norvegicus (Rat), this protein is Dystrophin-related protein 2 (Drp2).